Consider the following 323-residue polypeptide: Large ribosomal subunit protein uL10x (323 aa).

Residues 287 to 323 (DAGGGSAQAGAAAKVEEKKEESDEEDYEGGFGLFDEE) form a disordered region. At Ser308 the chain carries Phosphoserine. Over residues 308–323 (SDEEDYEGGFGLFDEE) the composition is skewed to acidic residues. Tyr313 carries the phosphotyrosine modification.

The protein belongs to the universal ribosomal protein uL10 family. As to quaternary structure, P0 forms a pentameric complex by interaction with dimers of P1 and P2.

Ribosomal protein P0 is the functional equivalent of E.coli protein L10. In Arabidopsis thaliana (Mouse-ear cress), this protein is Large ribosomal subunit protein uL10x (RPP0C).